The following is a 385-amino-acid chain: MNSYISLIFTLLFFTSAARSSSVSVETGSCVRYTTIYSSGSSEFTSTITPETPSSSSSTFVPISTHTSSATNTTSGQLSISSSSSTSSEYSSSSIPITTVSSSDSFIPSSSQTISASSSTTDNVIVSSSISSTVSSTPVSTIYSGTSGTTFVSSSTTYQVIPTQICDGVRGLEYAVYNYDLPSESTFCHPSNGYTEVSTFNKPAYFGSKDLKQSAPLFTGIFSSLDDIPTYSASDYLPAYPPNPEGMSSTSSSCKTIVYQFFFRVPATDNWSLFVKNVDDAFFGWFGDKAISGWSNVNYDAYAHWRIGAYGMGTFDLGYLEQDSFVPVRFVLANGAYIGGFDFAFNSSSTGPVRTTSYSYTSTCDKSFLPFGKGNGGLDEGTANV.

The signal sequence occupies residues 1–20 (MNSYISLIFTLLFFTSAARS). Positions 41-90 (SSEFTSTITPETPSSSSSTFVPISTHTSSATNTTSGQLSISSSSSTSSEY) are disordered. Residues N72, N270, and N346 are each glycosylated (N-linked (GlcNAc...) asparagine). One can recognise a PA14 domain in the interval 196-360 (EVSTFNKPAY…GPVRTTSYSY (165 aa)).

It is found in the secreted. The protein localises to the cell surface. Its function is as follows. May be involved in agglutination during conjugation or other aspects of colony formation. Induces flocculation when overexpressed. The polypeptide is Putative cell agglutination protein pfl8 (Schizosaccharomyces pombe (strain 972 / ATCC 24843) (Fission yeast)).